A 134-amino-acid polypeptide reads, in one-letter code: Aspartate 1-decarboxylase (134 aa).

The Schiff-base intermediate with substrate; via pyruvic acid role is filled by Ser25. Ser25 carries the pyruvic acid (Ser) modification. Thr57 provides a ligand contact to substrate. Tyr58 serves as the catalytic Proton donor. 73–75 serves as a coordination point for substrate; it reads GAA.

The protein belongs to the PanD family. Heterooctamer of four alpha and four beta subunits. Pyruvate is required as a cofactor. Post-translationally, is synthesized initially as an inactive proenzyme, which is activated by self-cleavage at a specific serine bond to produce a beta-subunit with a hydroxyl group at its C-terminus and an alpha-subunit with a pyruvoyl group at its N-terminus.

Its subcellular location is the cytoplasm. It catalyses the reaction L-aspartate + H(+) = beta-alanine + CO2. It functions in the pathway cofactor biosynthesis; (R)-pantothenate biosynthesis; beta-alanine from L-aspartate: step 1/1. In terms of biological role, catalyzes the pyruvoyl-dependent decarboxylation of aspartate to produce beta-alanine. The polypeptide is Aspartate 1-decarboxylase (Citrifermentans bemidjiense (strain ATCC BAA-1014 / DSM 16622 / JCM 12645 / Bem) (Geobacter bemidjiensis)).